A 461-amino-acid chain; its full sequence is Kynurenine 3-monooxygenase (461 aa).

Residues 17-18 (LA), 37-39 (ERR), and A56 each bind FAD. Residues R84 and Y98 each coordinate L-kynurenine. FAD-binding positions include R111, L135, D311, and 324–325 (MN). Residues N369 and Y404 each coordinate L-kynurenine.

It belongs to the aromatic-ring hydroxylase family. KMO subfamily. Requires FAD as cofactor.

It catalyses the reaction L-kynurenine + NADPH + O2 + H(+) = 3-hydroxy-L-kynurenine + NADP(+) + H2O. It participates in cofactor biosynthesis; NAD(+) biosynthesis; quinolinate from L-kynurenine: step 1/3. The protein operates within siderophore biosynthesis; quinolobactin biosynthesis. Its function is as follows. Catalyzes the hydroxylation of L-kynurenine (L-Kyn) to form 3-hydroxy-L-kynurenine (L-3OHKyn). Probably required for the synthesis of quinolinic acid and the siderophore quinolobactin. In Pseudomonas fluorescens, this protein is Kynurenine 3-monooxygenase.